Here is a 523-residue protein sequence, read N- to C-terminus: MSHEASGLKEDRKKVLKSAFLMASGTLTSRILGLFRDIALGALFDRAVTDAWTAAFRIPNLFRRLFGEGSLAVSFIPVFMQTQSEDPTGDRARNLANAFYSLLLVFLGVLTLLGIVYVEPLFRLILSSDYALDAAKWELTLRMGRIMFGFVFFVCTYAFYMGILNALGSFGLPALAPALLNVSMLVFTFMPPQWFAVHGDGLAWGVLIGGLLQALLLAVALKQRNYLPRLQKTLWTPEVKAVVRGMLPGLIGMGLLQFSTLVNLYFASSLPEGSISYIYWADRLLELPLSLISVSIGAALLPTLSDFANRGLKEKFQETAEESFLMNLFLAWPAALGLYILAEPIIEVLFLRGKFTVQDVQMTAAILRIYAVSLLLVSCSRVLMPLYYSVKNTKVPMVLALVSLAVHVSLAPVLMRQWGLEGLMISGVVAALINAVLLMGLLKKYSPGIRMSVLLRPALKFVLAGAGMVISLQAYELLMAQTGRGLQMLALFVTILLAVVAYFGLAYVLGCEQISRIRRSSQP.

A run of 12 helical transmembrane segments spans residues 98–118 (AFYS…IVYV), 146–166 (IMFG…ILNA), 170–190 (FGLP…FTFM), 201–221 (GLAW…AVAL), 246–266 (MLPG…NLYF), 284–304 (LLEL…LPTL), 328–348 (LFLA…IIEV), 360–380 (VQMT…VSCS), 395–415 (VPMV…PVLM), 422–442 (GLMI…MGLL), 461–481 (FVLA…LMAQ), and 489–509 (LALF…AYVL).

The protein belongs to the MurJ/MviN family.

The protein resides in the cell inner membrane. Its pathway is cell wall biogenesis; peptidoglycan biosynthesis. Involved in peptidoglycan biosynthesis. Transports lipid-linked peptidoglycan precursors from the inner to the outer leaflet of the cytoplasmic membrane. The polypeptide is Probable lipid II flippase MurJ (Bdellovibrio bacteriovorus (strain ATCC 15356 / DSM 50701 / NCIMB 9529 / HD100)).